The chain runs to 190 residues: Potassium-transporting ATPase KdpC subunit (190 aa).

Residues 10–30 (TFIFLLLITGGVYPLLTTVLG) traverse the membrane as a helical segment.

Belongs to the KdpC family. In terms of assembly, the system is composed of three essential subunits: KdpA, KdpB and KdpC.

It localises to the cell inner membrane. In terms of biological role, part of the high-affinity ATP-driven potassium transport (or Kdp) system, which catalyzes the hydrolysis of ATP coupled with the electrogenic transport of potassium into the cytoplasm. This subunit acts as a catalytic chaperone that increases the ATP-binding affinity of the ATP-hydrolyzing subunit KdpB by the formation of a transient KdpB/KdpC/ATP ternary complex. This Escherichia coli (strain SE11) protein is Potassium-transporting ATPase KdpC subunit.